Here is a 100-residue protein sequence, read N- to C-terminus: Small ribosomal subunit protein uS14c (100 aa).

It belongs to the universal ribosomal protein uS14 family. Part of the 30S ribosomal subunit.

Its subcellular location is the plastid. It localises to the chloroplast. Functionally, binds 16S rRNA, required for the assembly of 30S particles. This is Small ribosomal subunit protein uS14c from Pleurastrum terricola (Filamentous green alga).